The chain runs to 292 residues: Inositol monophosphatase 2 (292 aa).

The Mg(2+) site is built by Glu-75, Asp-94, Ile-96, Asp-97, and Asp-231. Glu-75 is a binding site for substrate. Residues 96–99 and Asp-231 each bind substrate; that span reads IDGT.

Belongs to the inositol monophosphatase superfamily. The cofactor is Mg(2+).

The enzyme catalyses a myo-inositol phosphate + H2O = myo-inositol + phosphate. Its pathway is polyol metabolism; myo-inositol biosynthesis; myo-inositol from D-glucose 6-phosphate: step 2/2. With respect to regulation, inhibited by Li(+) and Na(+). Its function is as follows. Responsible for the provision of inositol required for synthesis of phosphatidylinositol and polyphosphoinositides and involved in the inositol cycle of calcium signaling. This is Inositol monophosphatase 2 (INM2) from Saccharomyces cerevisiae (strain ATCC 204508 / S288c) (Baker's yeast).